The sequence spans 669 residues: Very long-chain fatty acid transport protein (669 aa).

Topologically, residues 1 to 5 (MSPIQ) are cytoplasmic. The helical transmembrane segment at 6–26 (VVVFALSRIFLLLFRLIKLII) threads the bilayer. The Extracellular portion of the chain corresponds to 27-148 (TPIQKSLGYL…YVAIDCTNKP (122 aa)). Residues 149–169 (LFVFLWLSLWNIGAIPAFLNY) form a helical membrane-spanning segment. Topologically, residues 170-270 (NTKGTPLVHS…TGLPKSAIMS (101 aa)) are cytoplasmic. 256 to 267 (YTSGTTGLPKSA) serves as a coordination point for ATP. An intramembrane segment occupies 271–339 (WRKSSVGCQV…FWKQVYLTGA (69 aa)). The Cytoplasmic portion of the chain corresponds to 340–669 (THIQYVGEVC…EAIDAQTIKL (330 aa)). The short motif at 501–551 (DAWYRCGDLLKADEYGLWYFLDRMGDTFRWKSENVSTTEVEDQLTASNKEQ) is the FACS element. Positions 667-669 (IKL) match the C-terminal peroxisome targeting signal (PTS1) motif.

It belongs to the ATP-dependent AMP-binding enzyme family. Interacts with fatty acyl-CoA synthetases FAA1 and FAA4.

It is found in the lipid droplet. The protein localises to the cell membrane. The protein resides in the peroxisome membrane. Its subcellular location is the peroxisome. The catalysed reaction is a very long-chain fatty acid + ATP + CoA = a very long-chain fatty acyl-CoA + AMP + diphosphate. It carries out the reaction tetracosanoate + ATP + CoA = tetracosanoyl-CoA + AMP + diphosphate. Acyl-CoA synthetase required for both the import of long chain fatty acids (LCFAs) (C14-C18) and the activation very long chain fatty acids (VLCFAs) (C20-C26) by esterification of the fatty acids into metabolically active CoA-thioesters for subsequent degradation or incorporation into phospholipids. The transport and fatty acyl-CoA synthetase activities are genetically separable and are thus independent activities. Esterifies VLCFAs in the peroxisome matrix. The VLCFAs are actively transported into peroxisomes by a PXA1-PXA2 heterodimeric transporter in the peroxisomal membrane. This Saccharomyces cerevisiae (strain ATCC 204508 / S288c) (Baker's yeast) protein is Very long-chain fatty acid transport protein (FAT1).